The primary structure comprises 218 residues: Large ribosomal subunit protein uL3 (218 aa).

The segment at 134–154 is disordered; the sequence is GRASHGNSRSHNVPGSIGMAQ. At glutamine 154 the chain carries N5-methylglutamine.

The protein belongs to the universal ribosomal protein uL3 family. Part of the 50S ribosomal subunit. Forms a cluster with proteins L14 and L19. In terms of processing, methylated by PrmB.

Functionally, one of the primary rRNA binding proteins, it binds directly near the 3'-end of the 23S rRNA, where it nucleates assembly of the 50S subunit. This Polynucleobacter necessarius subsp. necessarius (strain STIR1) protein is Large ribosomal subunit protein uL3.